The primary structure comprises 84 residues: U4-theraphotoxin-Hhn1ac (84 aa).

A signal peptide spans 1-22; that stretch reads MKVTLIAILTCAAVLVLHTTAA. Residues 23–47 constitute a propeptide that is removed on maturation; the sequence is EELEESQLMEVGMPDTELAAVDEER. Intrachain disulfides connect cysteine 51–cysteine 65, cysteine 55–cysteine 76, and cysteine 70–cysteine 81.

It belongs to the neurotoxin 12 (Hwtx-2) family. 02 (Hwtx-2) subfamily. As to expression, expressed by the venom gland.

Its subcellular location is the secreted. Its function is as follows. Postsynaptic neurotoxin. The sequence is that of U4-theraphotoxin-Hhn1ac from Cyriopagopus hainanus (Chinese bird spider).